Consider the following 129-residue polypeptide: Small ribosomal subunit protein uS11 (129 aa).

Residues 108–129 are disordered; sequence TPIPHNGTRPPKRVLKRLRLKK. The segment covering 117-129 has biased composition (basic residues); the sequence is PPKRVLKRLRLKK.

It belongs to the universal ribosomal protein uS11 family. Part of the 30S ribosomal subunit. Interacts with proteins S7 and S18. Binds to IF-3.

In terms of biological role, located on the platform of the 30S subunit, it bridges several disparate RNA helices of the 16S rRNA. Forms part of the Shine-Dalgarno cleft in the 70S ribosome. This is Small ribosomal subunit protein uS11 from Mycoplasmopsis synoviae (strain 53) (Mycoplasma synoviae).